The following is a 147-amino-acid chain: Probable flagellum biosynthesis repressor protein FlbT (147 aa).

Belongs to the FlbT family.

In terms of biological role, has a post-transcriptional repressor function in flagellum biogenesis. Associates with the 5'-UTR of fljK mRNA and promotes its degradation. The sequence is that of Probable flagellum biosynthesis repressor protein FlbT from Mesorhizobium japonicum (strain LMG 29417 / CECT 9101 / MAFF 303099) (Mesorhizobium loti (strain MAFF 303099)).